A 777-amino-acid polypeptide reads, in one-letter code: Elongation factor G, mitochondrial (777 aa).

Residues 34–338 (LRQRNVGISA…GMCAYLPNPM (305 aa)) enclose the tr-type G domain. GTP-binding positions include 43-50 (AHIDSGKT), 136-140 (DTPGH), and 190-193 (NKMD).

The protein belongs to the TRAFAC class translation factor GTPase superfamily. Classic translation factor GTPase family. EF-G/EF-2 subfamily.

It is found in the mitochondrion. The protein operates within protein biosynthesis; polypeptide chain elongation. Mitochondrial GTPase that catalyzes the GTP-dependent ribosomal translocation step during translation elongation. During this step, the ribosome changes from the pre-translocational (PRE) to the post-translocational (POST) state as the newly formed A-site-bound peptidyl-tRNA and P-site-bound deacylated tRNA move to the P and E sites, respectively. Catalyzes the coordinated movement of the two tRNA molecules, the mRNA and conformational changes in the ribosome. This chain is Elongation factor G, mitochondrial, found in Malassezia globosa (strain ATCC MYA-4612 / CBS 7966) (Dandruff-associated fungus).